A 441-amino-acid polypeptide reads, in one-letter code: Eukaryotic translation initiation factor 3 subunit E (441 aa).

The region spanning 223–407 is the PCI domain; it reads IFFNHDNGRT…GTVIMEPTQP (185 aa).

This sequence belongs to the eIF-3 subunit E family. Component of the eukaryotic translation initiation factor 3 (eIF-3) complex (Potential). Binds to the translation initiation factors TIF3F1 and TIF3H1. Associates with the CSN (COP9 signalosome) complex. Interacts directly with CSN1, CSN4, CSN6A, CSN6B, CSN7, CSN8 and TIF3C1. Binds to 40S small ribosomal subunit S9 (RPS9B and RPS9C) via its N-terminal part. Interacts with the 26S proteasome subunit RPN12a via its C-terminal part. Also binds with At1g27930 and At4g30620.

Its subcellular location is the cytoplasm. It is found in the nucleus. Component of the eukaryotic translation initiation factor 3 (eIF-3) complex, which is involved in protein synthesis of a specialized repertoire of mRNAs and, together with other initiation factors, stimulates binding of mRNA and methionyl-tRNAi to the 40S ribosome. The eIF-3 complex specifically targets and initiates translation of a subset of mRNAs involved in cell proliferation (Potential). Negatively regulates translation during flower development. This chain is Eukaryotic translation initiation factor 3 subunit E, found in Arabidopsis thaliana (Mouse-ear cress).